The primary structure comprises 37 residues: Potassium channel toxin alpha-KTx 4.8 (37 aa).

Disulfide bonds link C13–C33 and C17–C35.

It belongs to the short scorpion toxin superfamily. Potassium channel inhibitor family. Alpha-KTx 04 subfamily. As to expression, expressed by the venom gland.

The protein localises to the secreted. Reversible blocker of voltage-gated potassium channel Kv1.2/KCNA2 (Kd=65 nM) and calcium-activated potassium channels KCa2.2/KCNN2 (Kd=575 nM) and KCa3.1/KCNN4 (Kd=59 nM). In Centruroides margaritatus (Central American bark Scorpion), this protein is Potassium channel toxin alpha-KTx 4.8.